Reading from the N-terminus, the 1666-residue chain is MRRPGLGGPCPLLLLLLLPAATSASGSSPSPSPSPIEKAVVPSHQAGVAACHCCLDQTPKSSRCTRASCRVRNCPPAKCTGLEGCLTPTPSVPSPSRSPVEKSQVSLNWQPLTLQEARALLRQRRPRGPWARALLKRRPPHRAPAGQARVLCPLICHNGGVCVKPDRCLCPPDFAGKFCQLHSSGARPPAPAMPGLTRSVYTMPLANHRDDEHGVASMVSVHVEHPQEASVVVHQVERVSGPWEEANPEALARAEAAARAEAAAPYTVLAQSAPREDGYSDASGFGYCFRELRGSECASPLPGLRTQEVCCRGEGLAWGVHDCHPCAEHLRNSNQVSGPNGPCPPGFERVNGSCVDVDECATGGRCQHGECANTRGGYTCVCPDGFLLDSSRSSCISQHVISEAKGPCYRVLHDGGCSLPILRNITKQICCCSRVGKAWGRGCQLCPPYGSEGFREICPAGPGYHYSASDLRYNTRPLNQDPPRVTFNQPRVPPATPRPPTGFLPTRRPEPRPDPGPQPEPRPRPEPRPRPESRPRPEPRPRPEPRPQPESQPRPESRPRPESQPWPEFPLPSIPAWTGPEIPESGPSSSMCQRNPQVCGPGRCVPRPSGYTCACDPGFRLGPQGTRCIDIDECRRVPTPCAPGRCENTPGSFRCVCGTGFQAGPRATECLDVDECRRVPPPCDRGRCENTPGSFLCVCPAGYQAAPHGASCQDVDECTQSPGLCGRGVCENLPGSFRCVCPAGFRGSACEEDVDECAQQPPPCGPGRCDNTAGSFHCACPAGFRSRGPGAPCQDVDECSRSPSPCAYGRCENTEGSFKCVCPTGFQPNAAGSECEDVDECENRLACPGQECVNSPGSFQCRACPVGHHLHRGRCTDVDECSSGTPCGLHGQCTNTKGSFHCSCSTGYRAPSGQPGPCADINECLEGDFCFPHGECLNTDGSFTCTCAPGYRPGPRGASCLDVDECSEEDLCQSGICTNTDGSFECICPPGHRAGPDLASCLDIDECRERGPALCGSQRCENSPGSYRCVRDCDPGYHPGPEGTCDDIDECREYGSAICGAQRCENTPGSYRCTPACDPGYQPTPGGGCQDVDECRNRSFCGAHAMCQNLPGSFQCVCDQGYEGARDGRHCVDVNECETLQGVCGSALCENVEGSFLCVCPNSPEEFDPMTGRCVPPRAPAGTFPGSQPQAPASPSLPARPPAPPPPRRPSPPRQGPVSSGRRECYFDTAAPDACDNILARNVTWQECCCTVGEGWGSGCRIQQCPGTETAEYQSLCPHGRGYLVPSGDLSARRDVDECQLFQDQVCKSGVCVNTAPGYSCYCSNGFYYHAHRLECVDNDECADEEPACEGGRCVNTVGSYHCTCEPPLVLDGSRRRCVSNESQSLDDNLGVCWQEVGPDLVCSRPRLDRQATYTECCCLYGEAWGMDCALCPAQDSDDFEALCNVLRPPAYGPPRPGGFGIPYEYGPDIGPPYQSLPYGPDLYPPPVLPYDPYPPPPGPFARREAPYGAPPFDMPDFEDDGGPYGESETPDPPSRGTGWPYRSRDTRGSFPEPEESSERGSYTGALSEPYEGLEAEECGILDGCPHGRCVRVPEGFTCDCFDGYRLDITRMSCVDVNECDEAEATSPLCVNARCVNTDGSFRCICRPGFAPTHQPHHCAPARPRA.

The N-terminal stretch at 1-24 (MRRPGLGGPCPLLLLLLLPAATSA) is a signal peptide. In terms of domain architecture, EGF-like 1 spans 148–180 (ARVLCPLICHNGGVCVKPDRCLCPPDFAGKFCQ). Intrachain disulfides connect Cys-152–Cys-162, Cys-156–Cys-168, Cys-170–Cys-179, Cys-288–Cys-310, Cys-297–Cys-323, and Cys-311–Cys-326. The TB 1 domain occupies 286–338 (GYCFRELRGSECASPLPGLRTQEVCCRGEGLAWGVHDCHPCAEHLRNSNQVSG). Asn-351 is a glycosylation site (N-linked (GlcNAc...) asparagine). Residues 356 to 396 (DVDECATGGRCQHGECANTRGGYTCVCPDGFLLDSSRSSCI) enclose the EGF-like 2; calcium-binding domain. 7 cysteine pairs are disulfide-bonded: Cys-360–Cys-371, Cys-366–Cys-380, Cys-382–Cys-395, Cys-408–Cys-430, Cys-417–Cys-443, Cys-431–Cys-446, and Cys-432–Cys-458. Residues 406 to 458 (GPCYRVLHDGGCSLPILRNITKQICCCSRVGKAWGRGCQLCPPYGSEGFREIC) enclose the TB 2 domain. The N-linked (GlcNAc...) asparagine glycan is linked to Asn-424. Residues 473-590 (YNTRPLNQDP…EIPESGPSSS (118 aa)) are disordered. Over residues 491–502 (RVPPATPRPPTG) the composition is skewed to pro residues. Residues 521–561 (PRPRPEPRPRPESRPRPEPRPRPEPRPQPESQPRPESRPRP) show a composition bias toward basic and acidic residues. Over residues 562–573 (ESQPWPEFPLPS) the composition is skewed to pro residues. Residues 579 to 590 (GPEIPESGPSSS) show a composition bias toward low complexity. Positions 588 to 629 (SSSMCQRNPQVCGPGRCVPRPSGYTCACDPGFRLGPQGTRCI) constitute an EGF-like 3 domain. Intrachain disulfides connect Cys-592-Cys-604, Cys-599-Cys-613, Cys-615-Cys-628, Cys-634-Cys-646, Cys-641-Cys-655, Cys-657-Cys-670, Cys-676-Cys-688, Cys-683-Cys-697, Cys-699-Cys-712, Cys-718-Cys-730, Cys-725-Cys-739, Cys-741-Cys-750, Cys-757-Cys-769, Cys-764-Cys-778, Cys-780-Cys-793, Cys-799-Cys-811, Cys-806-Cys-820, Cys-822-Cys-835, Cys-881-Cys-893, Cys-887-Cys-902, Cys-904-Cys-918, Cys-924-Cys-936, Cys-930-Cys-945, Cys-947-Cys-960, Cys-966-Cys-977, Cys-972-Cys-986, Cys-988-Cys-1001, Cys-1095-Cys-1107, Cys-1101-Cys-1116, and Cys-1118-Cys-1131. Residues 630-671 (DIDECRRVPTPCAPGRCENTPGSFRCVCGTGFQAGPRATECL) form the EGF-like 4; calcium-binding domain. The EGF-like 5; calcium-binding domain occupies 672–713 (DVDECRRVPPPCDRGRCENTPGSFLCVCPAGYQAAPHGASCQ). One can recognise an EGF-like 6; calcium-binding domain in the interval 714-751 (DVDECTQSPGLCGRGVCENLPGSFRCVCPAGFRGSACE). Residues 753–794 (DVDECAQQPPPCGPGRCDNTAGSFHCACPAGFRSRGPGAPCQ) enclose the EGF-like 7; calcium-binding domain. The region spanning 795–836 (DVDECSRSPSPCAYGRCENTEGSFKCVCPTGFQPNAAGSECE) is the EGF-like 8; calcium-binding domain. Residues 877 to 919 (DVDECSSGTPCGLHGQCTNTKGSFHCSCSTGYRAPSGQPGPCA) enclose the EGF-like 9; calcium-binding domain. The EGF-like 10; calcium-binding domain maps to 920–961 (DINECLEGDFCFPHGECLNTDGSFTCTCAPGYRPGPRGASCL). An EGF-like 11; calcium-binding domain is found at 962–1002 (DVDECSEEDLCQSGICTNTDGSFECICPPGHRAGPDLASCL). The region spanning 1091–1132 (DVDECRNRSFCGAHAMCQNLPGSFQCVCDQGYEGARDGRHCV) is the EGF-like 12; calcium-binding domain. Asn-1097 carries an N-linked (GlcNAc...) asparagine glycan. The tract at residues 1171 to 1221 (TGRCVPPRAPAGTFPGSQPQAPASPSLPARPPAPPPPRRPSPPRQGPVSSG) is disordered. The segment covering 1185 to 1197 (PGSQPQAPASPSL) has biased composition (low complexity). Positions 1198-1215 (PARPPAPPPPRRPSPPRQ) are enriched in pro residues. Positions 1223 to 1277 (RECYFDTAAPDACDNILARNVTWQECCCTVGEGWGSGCRIQQCPGTETAEYQSLC) constitute a TB 3 domain. 10 disulfide bridges follow: Cys-1225–Cys-1248, Cys-1235–Cys-1260, Cys-1249–Cys-1265, Cys-1250–Cys-1277, Cys-1299–Cys-1312, Cys-1307–Cys-1321, Cys-1323–Cys-1336, Cys-1342–Cys-1354, Cys-1349–Cys-1363, and Cys-1365–Cys-1378. The N-linked (GlcNAc...) asparagine glycan is linked to Asn-1242. The EGF-like 13; calcium-binding domain maps to 1295-1337 (DVDECQLFQDQVCKSGVCVNTAPGYSCYCSNGFYYHAHRLECV). The EGF-like 14; calcium-binding domain occupies 1338-1379 (DNDECADEEPACEGGRCVNTVGSYHCTCEPPLVLDGSRRRCV). Asn-1381 carries an N-linked (GlcNAc...) asparagine glycan. The 54-residue stretch at 1391–1444 (GVCWQEVGPDLVCSRPRLDRQATYTECCCLYGEAWGMDCALCPAQDSDDFEALC) folds into the TB 4 domain. Disulfide bonds link Cys-1393–Cys-1417, Cys-1403–Cys-1429, Cys-1418–Cys-1432, and Cys-1419–Cys-1444. The segment covering 1488–1500 (VLPYDPYPPPPGP) has biased composition (pro residues). Residues 1488–1566 (VLPYDPYPPP…SSERGSYTGA (79 aa)) form a disordered region. Thr-1564 bears the Phosphothreonine mark. EGF-like domains lie at 1575–1615 (EAEE…MSCV) and 1616–1660 (DVNE…HHCA). 6 cysteine pairs are disulfide-bonded: Cys-1579–Cys-1590, Cys-1585–Cys-1599, Cys-1601–Cys-1614, Cys-1620–Cys-1635, Cys-1630–Cys-1644, and Cys-1646–Cys-1659.

This sequence belongs to the LTBP family. In terms of assembly, forms part of the large latent transforming growth factor beta precursor complex; removal is essential for activation of complex. Interacts with LTBP1 and TGFB1. Interacts with EFEMP2; this interaction promotes fibrillar deposition of EFEMP2. Post-translationally, contains hydroxylated asparagine residues.

The protein localises to the secreted. The protein resides in the extracellular space. Its subcellular location is the extracellular matrix. Functionally, key regulator of transforming growth factor beta (TGFB1, TGFB2 and TGFB3) that controls TGF-beta activation by maintaining it in a latent state during storage in extracellular space. Associates specifically via disulfide bonds with the Latency-associated peptide (LAP), which is the regulatory chain of TGF-beta, and regulates integrin-dependent activation of TGF-beta. The sequence is that of Latent-transforming growth factor beta-binding protein 4 (Ltbp4) from Mus musculus (Mouse).